The chain runs to 183 residues: Ribosome maturation factor RimM (183 aa).

Positions 104-183 constitute a PRC barrel domain; sequence EGDYYWKDLM…TIEVDWDPGF (80 aa).

The protein belongs to the RimM family. As to quaternary structure, binds ribosomal protein uS19.

The protein localises to the cytoplasm. In terms of biological role, an accessory protein needed during the final step in the assembly of 30S ribosomal subunit, possibly for assembly of the head region. Essential for efficient processing of 16S rRNA. May be needed both before and after RbfA during the maturation of 16S rRNA. It has affinity for free ribosomal 30S subunits but not for 70S ribosomes. The chain is Ribosome maturation factor RimM from Salmonella arizonae (strain ATCC BAA-731 / CDC346-86 / RSK2980).